Consider the following 303-residue polypeptide: RELT-like protein 2 (303 aa).

Residues 15-35 (LYMLFLLVLVFFLMGLVGFMI) form a helical membrane-spanning segment. 2 disordered regions span residues 46 to 67 (CRTS…DDDM) and 111 to 303 (SSLQ…AGGV). Ser-52 carries the phosphoserine modification. Composition is skewed to basic and acidic residues over residues 148–158 (RSKEGKSRPRP) and 172–188 (THIE…DGSP). The span at 194–212 (GSGGGQDPGGGQGPGGGQP) shows a compositional bias: gly residues.

Belongs to the RELT family. As to quaternary structure, interacts with RELT, RELL1, OXSR1, PLSCR1 and TRAF2.

It localises to the cell membrane. Induces activation of MAPK14/p38 cascade, when overexpressed. Induces apoptosis, when overexpressed. This chain is RELT-like protein 2 (RELL2), found in Bos taurus (Bovine).